The sequence spans 127 residues: Interacting with cytoskeleton protein 1 (127 aa).

Its subcellular location is the vacuole membrane. Required for viability of cells lacking mtDNA. This chain is Interacting with cytoskeleton protein 1 (ICY1), found in Saccharomyces cerevisiae (strain ATCC 204508 / S288c) (Baker's yeast).